Consider the following 456-residue polypeptide: tRNA modification GTPase MnmE (456 aa).

Positions 24, 81, and 120 each coordinate (6S)-5-formyl-5,6,7,8-tetrahydrofolate. The TrmE-type G domain maps to 216-379 (GMTVVIAGRP…LREHLKACMG (164 aa)). Asn226 lines the K(+) pocket. Residues 226–231 (NAGKSS), 245–251 (TEIAGTT), 270–273 (DTAG), 335–338 (NKAD), and 359–361 (SAR) each bind GTP. Mg(2+) is bound at residue Ser230. Positions 245, 247, and 250 each coordinate K(+). Thr251 is a binding site for Mg(2+). Position 456 (Lys456) interacts with (6S)-5-formyl-5,6,7,8-tetrahydrofolate.

It belongs to the TRAFAC class TrmE-Era-EngA-EngB-Septin-like GTPase superfamily. TrmE GTPase family. In terms of assembly, homodimer. Heterotetramer of two MnmE and two MnmG subunits. It depends on K(+) as a cofactor.

The protein localises to the cytoplasm. In terms of biological role, exhibits a very high intrinsic GTPase hydrolysis rate. Involved in the addition of a carboxymethylaminomethyl (cmnm) group at the wobble position (U34) of certain tRNAs, forming tRNA-cmnm(5)s(2)U34. This chain is tRNA modification GTPase MnmE, found in Pseudomonas savastanoi pv. phaseolicola (strain 1448A / Race 6) (Pseudomonas syringae pv. phaseolicola (strain 1448A / Race 6)).